The following is a 218-amino-acid chain: Thiopurine S-methyltransferase (218 aa).

W10, L45, E66, and R123 together coordinate S-adenosyl-L-methionine.

It belongs to the class I-like SAM-binding methyltransferase superfamily. TPMT family.

It is found in the cytoplasm. The enzyme catalyses S-adenosyl-L-methionine + a thiopurine = S-adenosyl-L-homocysteine + a thiopurine S-methylether.. The sequence is that of Thiopurine S-methyltransferase from Xanthomonas euvesicatoria pv. vesicatoria (strain 85-10) (Xanthomonas campestris pv. vesicatoria).